The following is a 649-amino-acid chain: Protein arginine N-methyltransferase 5 (649 aa).

The segment at 10-300 is TIM barrel; the sequence is KSESRYCGVE…SPYLDYIAYI (291 aa). The SAM-dependent MTase PRMT-type domain maps to 321–627; the sequence is LQSPLQPLMD…CGATKVWYEW (307 aa). Tyrosine 337 is an S-adenosyl-L-methionine binding site. Residue phenylalanine 340 participates in a protein binding. S-adenosyl-L-methionine is bound by residues 346-347, glutamate 405, and 433-434; these read KY and DM. Residues glutamate 449 and glutamate 458 each contribute to the a protein site. Active-site proton donor/acceptor residues include glutamate 449 and glutamate 458. The segment at 479 to 649 is beta barrel; that stretch reads PSSYTSFIEP…SNGRSYWVGL (171 aa). The tract at residues 491-507 is dimerization; sequence ASKLHNDIKAHKDIAHF.

The protein belongs to the class I-like SAM-binding methyltransferase superfamily. Protein arginine N-methyltransferase family.

The protein resides in the cytoplasm. The catalysed reaction is L-arginyl-[protein] + 2 S-adenosyl-L-methionine = N(omega),N(omega)'-dimethyl-L-arginyl-[protein] + 2 S-adenosyl-L-homocysteine + 2 H(+). Methylates arginine residues in proteins such as histone H4. In Oryza sativa subsp. japonica (Rice), this protein is Protein arginine N-methyltransferase 5 (PRMT5).